A 62-amino-acid polypeptide reads, in one-letter code: Bacteriocin pediocin PA-1 (62 aa).

The propeptide occupies 1 to 18 (MKKIEKLTEKEMANIIGG). Disulfide bonds link Cys-27/Cys-32 and Cys-42/Cys-62. The tract at residues 40-52 (TTCIINNGAMAWA) is hydrophobic.

This sequence belongs to the bacteriocin class IIA/YGNGV family.

It localises to the secreted. In terms of biological role, bactericidal activity (effective inhibitor of L.monocytogenes). The polypeptide is Bacteriocin pediocin PA-1 (pedA) (Pediococcus acidilactici).